We begin with the raw amino-acid sequence, 419 residues long: MPIFKKTLIVLSFIFLISILIYLNMYLFGTSTVGIYGVILITYLVIKLGLSFLYEPFKGNPHDYKVAAVIPSYNEDAESLLETLKSVLAQTYPLSEIYIVDDGSSNTDAIQLIEEYVNREVDICRNVIVHRSLVNKGKRHAQAWAFERSDADVFLTVDSDTYIYPNALEELLKSFNDETVYAATGHLNARNRQTNLLTRLTDIRYDNAFGVERAAQSLTGNILVCSGPLSIYRREVIIPNLERYKNQTFLGLPVSIGDDRCLTNYAIDLGRTVYQSTARCDTDVPFQLKSYLKQQNRWNKSFFRESIISVKKILSNPIVALWTIFEVVMFMMLIVAIGNLLFNQAIQLDLIKLFAFLSIIFIVALCRNVHYMVKHPASFLLSPLYGILHLFVLQPLKLYSLCTIKNTEWGTRKKVTIFK.

A run of 5 helical transmembrane segments spans residues 8–28 (LIVL…MYLF), 33–53 (VGIY…LSFL), 318–338 (IVAL…VAIG), 345–365 (AIQL…IVAL), and 376–396 (PASF…LQPL).

Belongs to the NodC/HAS family. The cofactor is Mg(2+).

The protein resides in the cell membrane. It catalyses the reaction [hyaluronan](n) + UDP-N-acetyl-alpha-D-glucosamine = N-acetyl-beta-D-glucosaminyl-(1-&gt;4)-[hyaluronan](n) + UDP + H(+). The enzyme catalyses N-acetyl-beta-D-glucosaminyl-(1-&gt;4)-[hyaluronan](n) + UDP-alpha-D-glucuronate = [hyaluronan](n+1) + UDP + H(+). Its pathway is glycan biosynthesis; hyaluronan biosynthesis. In terms of biological role, glycosaminoglycan synthesis. The hyaluronic acid capsule is involved in the pathogenicity of group A Streptococci; it may be the major virulence determinant. This is Hyaluronan synthase (hasA) from Streptococcus pyogenes serotype M6 (strain ATCC BAA-946 / MGAS10394).